The following is a 157-amino-acid chain: Ribosome maturation factor RimP (157 aa).

It belongs to the RimP family.

It localises to the cytoplasm. In terms of biological role, required for maturation of 30S ribosomal subunits. The polypeptide is Ribosome maturation factor RimP (Thermus thermophilus (strain ATCC BAA-163 / DSM 7039 / HB27)).